Here is a 339-residue protein sequence, read N- to C-terminus: Phenylalanine--tRNA ligase alpha subunit (339 aa).

Glutamate 253 contacts Mg(2+).

The protein belongs to the class-II aminoacyl-tRNA synthetase family. Phe-tRNA synthetase alpha subunit type 1 subfamily. Tetramer of two alpha and two beta subunits. Requires Mg(2+) as cofactor.

The protein resides in the cytoplasm. It carries out the reaction tRNA(Phe) + L-phenylalanine + ATP = L-phenylalanyl-tRNA(Phe) + AMP + diphosphate + H(+). This chain is Phenylalanine--tRNA ligase alpha subunit, found in Geobacter sulfurreducens (strain ATCC 51573 / DSM 12127 / PCA).